Consider the following 478-residue polypeptide: Cytochrome c biogenesis protein CcsB (478 aa).

3 consecutive transmembrane segments (helical) span residues leucine 30–isoleucine 50, threonine 89–threonine 109, and phenylalanine 175–serine 195. Residues leucine 453–glycine 478 are disordered. Residues proline 456 to alanine 466 show a composition bias toward pro residues.

The protein belongs to the Ccs1/CcsB family. May interact with CcsA.

Its subcellular location is the cellular thylakoid membrane. Functionally, required during biogenesis of c-type cytochromes (cytochrome c6 and cytochrome f) at the step of heme attachment. This Synechococcus sp. (strain JA-3-3Ab) (Cyanobacteria bacterium Yellowstone A-Prime) protein is Cytochrome c biogenesis protein CcsB.